The primary structure comprises 251 residues: Zinc import ATP-binding protein ZnuC (251 aa).

The ABC transporter domain occupies valine 5–arginine 220. Glycine 37 to serine 44 contacts ATP.

This sequence belongs to the ABC transporter superfamily. Zinc importer (TC 3.A.1.15.5) family. The complex is composed of two ATP-binding proteins (ZnuC), two transmembrane proteins (ZnuB) and a solute-binding protein (ZnuA).

It is found in the cell inner membrane. It catalyses the reaction Zn(2+)(out) + ATP(in) + H2O(in) = Zn(2+)(in) + ADP(in) + phosphate(in) + H(+)(in). In terms of biological role, part of the ABC transporter complex ZnuABC involved in zinc import. Responsible for energy coupling to the transport system. The sequence is that of Zinc import ATP-binding protein ZnuC from Escherichia coli O157:H7.